We begin with the raw amino-acid sequence, 164 residues long: Diphosphoinositol polyphosphate phosphohydrolase 3-beta (164 aa).

Residues Arg-9, 17 to 19, and 38 to 40 each bind substrate; these read KKR and SSR. One can recognise a Nudix hydrolase domain in the interval 17-144; it reads KKRAACLCFR…VHAEYLEKLK (128 aa). Mg(2+)-binding residues include Gly-49 and Glu-65. A Nudix box motif is present at residues 50 to 71; the sequence is GGMEPEEEPGGAAVREVYEEAG. Residue Glu-68 is the Proton acceptor of the active site. Residue Glu-69 coordinates Mg(2+). Residues 89-91, Arg-115, and Lys-133 contribute to the substrate site; that span reads RKH. The tract at residues 144–164 is disordered; sequence KLGGSPTNGNSMAPSSPDSDP. Over residues 148–164 the composition is skewed to polar residues; that stretch reads SPTNGNSMAPSSPDSDP.

It belongs to the Nudix hydrolase family. DIPP subfamily. It depends on Mg(2+) as a cofactor. Requires Mn(2+) as cofactor. As to expression, mainly expressed in testis and, at lower level in brain. According to PubMed:12121577, it is also expressed in pancreas and weakly expressed in thymus, prostate, ovary, lung, small intestine and heart.

The protein resides in the cytoplasm. The catalysed reaction is diphospho-myo-inositol polyphosphate + H2O = myo-inositol polyphosphate + phosphate.. The enzyme catalyses P(1),P(6)-bis(5'-adenosyl) hexaphosphate + H2O = adenosine 5'-pentaphosphate + AMP + 2 H(+). It catalyses the reaction P(1),P(5)-bis(5'-adenosyl) pentaphosphate + H2O = adenosine 5'-tetraphosphate + AMP + 2 H(+). Functionally, cleaves a beta-phosphate from the diphosphate groups in PP-InsP5 (diphosphoinositol pentakisphosphate), suggesting that it may play a role in signal transduction. Also able to catalyze the hydrolysis of dinucleoside oligophosphates, with Ap6A and Ap5A being the preferred substrates. The major reaction products are ADP and p4a from Ap6A and ADP and ATP from Ap5A. Also able to hydrolyze 5-phosphoribose 1-diphosphate. The chain is Diphosphoinositol polyphosphate phosphohydrolase 3-beta from Homo sapiens (Human).